The chain runs to 154 residues: MSTRNSRSELEKTAVQLFRKLGTRTVLFHQAAAQALGLFPTDLKSADILNEAGPMTAGELGKKTGLSTGSVTALVDRLEKAGYVAREKDPNDRRRVVIVPLTASKKHIKDLFRPLSESTMDLCREYTEEELELIFSFVGKAADIMEEELERLKQ.

Residues 7 to 143 (RSELEKTAVQ…IFSFVGKAAD (137 aa)) enclose the HTH marR-type domain. Positions 57-80 (AGELGKKTGLSTGSVTALVDRLEK) form a DNA-binding region, H-T-H motif.

This is an uncharacterized protein from Bacillus subtilis (strain 168).